The chain runs to 237 residues: 7-cyano-7-deazaguanine synthase (237 aa).

ATP is bound at residue 9 to 19; it reads YSGGLDSTTCL. Zn(2+)-binding residues include Cys189, Cys199, Cys202, and Cys205.

This sequence belongs to the QueC family. Zn(2+) serves as cofactor.

It catalyses the reaction 7-carboxy-7-deazaguanine + NH4(+) + ATP = 7-cyano-7-deazaguanine + ADP + phosphate + H2O + H(+). The protein operates within purine metabolism; 7-cyano-7-deazaguanine biosynthesis. Functionally, catalyzes the ATP-dependent conversion of 7-carboxy-7-deazaguanine (CDG) to 7-cyano-7-deazaguanine (preQ(0)). This chain is 7-cyano-7-deazaguanine synthase, found in Geobacter sulfurreducens (strain ATCC 51573 / DSM 12127 / PCA).